The chain runs to 548 residues: Sesquiterpene synthase TPS1 (548 aa).

(2E,6E)-farnesyl diphosphate is bound by residues Arg-264, Asp-301, Asp-305, Arg-442, and Asp-445. Residues Asp-301 and Asp-305 each coordinate Mg(2+). The DDXXD motif signature appears at 301–305 (DDTYD). Mg(2+)-binding residues include Asp-445 and Glu-453.

This sequence belongs to the terpene synthase family. Tpsa subfamily. Monomer. Mg(2+) serves as cofactor. In terms of tissue distribution, expressed in leaves and stems.

It is found in the cytoplasm. It catalyses the reaction (2E,6E)-farnesyl diphosphate = germacrene D + diphosphate. It carries out the reaction (2E,6E)-farnesyl diphosphate = (-)-(E)-beta-caryophyllene + diphosphate. The enzyme catalyses (2E,6E)-farnesyl diphosphate = beta-copaene + diphosphate. Its pathway is secondary metabolite biosynthesis; terpenoid biosynthesis. Functionally, sesquiterpene synthase involved in the biosynthesis of volatile compounds. Mediates the conversion of (2E,6E)-farnesyl diphosphate (FPP) into germacrene D, (-)-(E)-beta-caryophyllene and beta-copaene. In Xanthium strumarium (Rough cocklebur), this protein is Sesquiterpene synthase TPS1.